The primary structure comprises 278 residues: Myb/SANT-like DNA-binding domain-containing protein 1 (278 aa).

The region spanning 44 to 131 (RNWTDAEMRG…WPYYLAIDRI (88 aa)) is the Myb-like domain. Residues 139–167 (CEGKLPDGQQPGPSTSQTEASLSPSAKST) are disordered. Residues 149 to 166 (PGPSTSQTEASLSPSAKS) are compositionally biased toward polar residues.

This chain is Myb/SANT-like DNA-binding domain-containing protein 1 (Msantd1), found in Mus musculus (Mouse).